Reading from the N-terminus, the 317-residue chain is Taste receptor type 2 member 7 (317 aa).

Over Met1–Leu9 the chain is Extracellular. The helical transmembrane segment at Leu10–Val30 threads the bilayer. Over Asn31–Arg55 the chain is Cytoplasmic. Residues Ile56–Tyr76 form a helical membrane-spanning segment. The Extracellular portion of the chain corresponds to Ala77 to His94. A helical membrane pass occupies residues Leu95–Phe115. Residues His116–Arg128 are Cytoplasmic-facing. The helical transmembrane segment at Val129–Thr149 threads the bilayer. The Extracellular segment spans residues Glu150–Asn187. N-linked (GlcNAc...) asparagine glycosylation occurs at Asn167. The helical transmembrane segment at Leu188–Leu208 threads the bilayer. The Cytoplasmic segment spans residues Trp209–Lys235. A helical membrane pass occupies residues Ala236–Ser256. Residues Ser257 to Ala266 lie on the Extracellular side of the membrane. A helical membrane pass occupies residues Val267 to Leu287. Topologically, residues Gly288 to Ile317 are cytoplasmic.

Belongs to the G-protein coupled receptor T2R family.

Its subcellular location is the membrane. Its function is as follows. Gustducin-coupled receptor implicated in the perception of bitter compounds in the oral cavity and the gastrointestinal tract. Signals through PLCB2 and the calcium-regulated cation channel TRPM5. In Papio hamadryas (Hamadryas baboon), this protein is Taste receptor type 2 member 7 (TAS2R7).